The following is a 180-amino-acid chain: Large ribosomal subunit protein uL5 (180 aa).

It belongs to the universal ribosomal protein uL5 family. In terms of assembly, part of the 50S ribosomal subunit; part of the 5S rRNA/L5/L18/L25 subcomplex. Contacts the 5S rRNA and the P site tRNA. Forms a bridge to the 30S subunit in the 70S ribosome.

This is one of the proteins that bind and probably mediate the attachment of the 5S RNA into the large ribosomal subunit, where it forms part of the central protuberance. In the 70S ribosome it contacts protein S13 of the 30S subunit (bridge B1b), connecting the 2 subunits; this bridge is implicated in subunit movement. Contacts the P site tRNA; the 5S rRNA and some of its associated proteins might help stabilize positioning of ribosome-bound tRNAs. This chain is Large ribosomal subunit protein uL5, found in Brevibacillus brevis (strain 47 / JCM 6285 / NBRC 100599).